The following is a 314-amino-acid chain: MRPEGSLTYRVPERLRQGFCGVGRAAQALVCASAKEGTAFRMEAVQEGAAGVESEQAALGEEAVLLLDDIMAEVEVVAEVEVVAEEEGLVERREEAQRAQQAVPGPGPMTPESALEELLAVQVELEPVNAQARKAFSRQREKMERRRKPHLDRRGAVIQSVPGFWANVIANHPQMSALITDEDEDMLSYMVSLEVEEEKHPVHLCKIMLFFRSNPYFQNKVITKEYLVNITEYRASHSTPIEWYPDYEVEAYRRRHHNSSLNFFNWFSDHNFAGSNKIAEILCKDLWRNPLQYYKRMKPPEEGTETSGDSQLLS.

It belongs to the nucleosome assembly protein (NAP) family.

The protein resides in the cytoplasm. It localises to the nucleus. Functionally, may be involved in sperm differentiation and proliferation. The polypeptide is Testis-specific Y-encoded protein 4 (TSPY4) (Homo sapiens (Human)).